Consider the following 782-residue polypeptide: Protein PAT1 homolog 1 (782 aa).

Disordered stretches follow at residues 96–153, 177–217, 332–372, and 460–481; these read GPKH…HSKP, LPES…YSAP, VREH…SKHM, and EVDS…GKHL. The segment covering 108-117 has biased composition (low complexity); that stretch reads SGSFSRESSS. Polar residues predominate over residues 208–217; that stretch reads GGSQLTYSAP. Residues 335–347 are compositionally biased toward basic residues; sequence HKHKSSHRSRKNR. Polar residues predominate over residues 348 to 366; sequence GLSQQTSDAASQKSETGLQ. Positions 471 to 481 are enriched in basic and acidic residues; the sequence is SGDHKGSGKHL.

Interacts with AFPH2/NINJA. In terms of tissue distribution, expressed in root vasculature, shoot apical meristem (SAM) and leaves.

Its function is as follows. Activator of mRNA decapping. Involved in mRNA decay via decapping. Involved in the regulation of root stem cell niche identity. Maintains root stem cell niche stability through the interaction with the negative regulator of jasmonate signaling AFPH2/NINJA, and the regulation of cell division. The chain is Protein PAT1 homolog 1 from Arabidopsis thaliana (Mouse-ear cress).